Consider the following 522-residue polypeptide: Peptide chain release factor 3 (522 aa).

Residues 10–277 (ASRKTFAIIS…TFVDFAPAPS (268 aa)) enclose the tr-type G domain. Residues 19–26 (SHPDAGKT), 87–91 (DTPGH), and 141–144 (NKMD) contribute to the GTP site.

Belongs to the TRAFAC class translation factor GTPase superfamily. Classic translation factor GTPase family. PrfC subfamily.

Its subcellular location is the cytoplasm. Its function is as follows. Increases the formation of ribosomal termination complexes and stimulates activities of RF-1 and RF-2. It binds guanine nucleotides and has strong preference for UGA stop codons. It may interact directly with the ribosome. The stimulation of RF-1 and RF-2 is significantly reduced by GTP and GDP, but not by GMP. The sequence is that of Peptide chain release factor 3 from Listeria welshimeri serovar 6b (strain ATCC 35897 / DSM 20650 / CCUG 15529 / CIP 8149 / NCTC 11857 / SLCC 5334 / V8).